Here is a 303-residue protein sequence, read N- to C-terminus: MTHHSLKHISDRIKQALNQIENRNLAQDLWYILGEQNFQGFLPAFTVNHFCEKYHMTDKELALILLPVSACYANPTISHFSVGAIAKGESGNFYFGANQEFCTTNIQQTVHAEQSAISHAWMRRESKITEITVNYTPCGHCRQFMNELNSAETLRIHLPHSQDNLLHHYLPDAFGPHNLQIDNRLFDKKAHNLFLITEDPLIQAALDAANQSHAPYSKTYSGIALQLQDQQIFQGSYAENAAFNPSLPPLQTALNYLLLNGNEVENIARAVLVEQPFRLSYRGMTEELLAYLGDIPLDYIQVS.

CMP/dCMP-type deaminase domains follow at residues 57 to 172 and 196 to 303; these read TDKE…YLPD and ITED…IQVS. Substrate is bound at residue 98 to 100; it reads NQE. Histidine 111 lines the Zn(2+) pocket. Glutamate 113 (proton donor) is an active-site residue. The Zn(2+) site is built by cysteine 138 and cysteine 141.

It belongs to the cytidine and deoxycytidylate deaminase family. In terms of assembly, homodimer. Zn(2+) is required as a cofactor.

It catalyses the reaction cytidine + H2O + H(+) = uridine + NH4(+). The catalysed reaction is 2'-deoxycytidine + H2O + H(+) = 2'-deoxyuridine + NH4(+). This enzyme scavenges exogenous and endogenous cytidine and 2'-deoxycytidine for UMP synthesis. This chain is Cytidine deaminase, found in Histophilus somni (strain 2336) (Haemophilus somnus).